We begin with the raw amino-acid sequence, 192 residues long: Cytidylate kinase (192 aa).

7 to 15 (GPAGSGKST) provides a ligand contact to ATP.

This sequence belongs to the cytidylate kinase family. Type 2 subfamily.

It localises to the cytoplasm. It carries out the reaction CMP + ATP = CDP + ADP. The enzyme catalyses dCMP + ATP = dCDP + ADP. This chain is Cytidylate kinase, found in Haloarcula marismortui (strain ATCC 43049 / DSM 3752 / JCM 8966 / VKM B-1809) (Halobacterium marismortui).